A 122-amino-acid chain; its full sequence is Small ribosomal subunit protein uS13 (122 aa).

A disordered region spans residues 95 to 122; sequence GLPVHGQRTHTNARTRKGPRRGAVGKKK.

The protein belongs to the universal ribosomal protein uS13 family. In terms of assembly, part of the 30S ribosomal subunit. Forms a loose heterodimer with protein S19. Forms two bridges to the 50S subunit in the 70S ribosome.

Its function is as follows. Located at the top of the head of the 30S subunit, it contacts several helices of the 16S rRNA. In the 70S ribosome it contacts the 23S rRNA (bridge B1a) and protein L5 of the 50S subunit (bridge B1b), connecting the 2 subunits; these bridges are implicated in subunit movement. Contacts the tRNAs in the A and P-sites. The chain is Small ribosomal subunit protein uS13 from Desulfovibrio desulfuricans (strain ATCC 27774 / DSM 6949 / MB).